The sequence spans 265 residues: Glutamate racemase (265 aa).

Substrate contacts are provided by residues 12 to 13 and 44 to 45; these read DS and YG. The active-site Proton donor/acceptor is the C75. A substrate-binding site is contributed by 76–77; the sequence is NT. C186 acts as the Proton donor/acceptor in catalysis. 187 to 188 lines the substrate pocket; it reads TH.

The protein belongs to the aspartate/glutamate racemases family.

The catalysed reaction is L-glutamate = D-glutamate. It functions in the pathway cell wall biogenesis; peptidoglycan biosynthesis. Its function is as follows. Provides the (R)-glutamate required for cell wall biosynthesis. This Pseudomonas putida (strain ATCC 700007 / DSM 6899 / JCM 31910 / BCRC 17059 / LMG 24140 / F1) protein is Glutamate racemase.